The primary structure comprises 373 residues: Bifunctional enzyme IspD/IspF (373 aa).

The tract at residues 1-212 is 2-C-methyl-D-erythritol 4-phosphate cytidylyltransferase; the sequence is MPDITLILLG…PCIEAPSGKT (212 aa). Residues 213 to 373 are 2-C-methyl-D-erythritol 2,4-cyclodiphosphate synthase; sequence LTGFGLDIHP…NLTYYNWKQK (161 aa). A divalent metal cation-binding residues include D219 and H221. 4-CDP-2-C-methyl-D-erythritol 2-phosphate contacts are provided by residues 219–221 and 245–246; these read DIH and HS. Residue H253 coordinates a divalent metal cation. Residues 267 to 269, 272 to 276, 343 to 346, F350, and R353 contribute to the 4-CDP-2-C-methyl-D-erythritol 2-phosphate site; these read DIG, YPDTD, and TTAE.

In the N-terminal section; belongs to the IspD/TarI cytidylyltransferase family. IspD subfamily. It in the C-terminal section; belongs to the IspF family. A divalent metal cation is required as a cofactor.

The catalysed reaction is 2-C-methyl-D-erythritol 4-phosphate + CTP + H(+) = 4-CDP-2-C-methyl-D-erythritol + diphosphate. It carries out the reaction 4-CDP-2-C-methyl-D-erythritol 2-phosphate = 2-C-methyl-D-erythritol 2,4-cyclic diphosphate + CMP. Its pathway is isoprenoid biosynthesis; isopentenyl diphosphate biosynthesis via DXP pathway; isopentenyl diphosphate from 1-deoxy-D-xylulose 5-phosphate: step 2/6. It participates in isoprenoid biosynthesis; isopentenyl diphosphate biosynthesis via DXP pathway; isopentenyl diphosphate from 1-deoxy-D-xylulose 5-phosphate: step 4/6. In terms of biological role, bifunctional enzyme that catalyzes the formation of 4-diphosphocytidyl-2-C-methyl-D-erythritol from CTP and 2-C-methyl-D-erythritol 4-phosphate (MEP) (IspD), and catalyzes the conversion of 4-diphosphocytidyl-2-C-methyl-D-erythritol 2-phosphate (CDP-ME2P) to 2-C-methyl-D-erythritol 2,4-cyclodiphosphate (ME-CPP) with a corresponding release of cytidine 5-monophosphate (CMP) (IspF). The polypeptide is Bifunctional enzyme IspD/IspF (Sulfurovum sp. (strain NBC37-1)).